Here is a 666-residue protein sequence, read N- to C-terminus: DNA-directed RNA polymerase subunit beta' (666 aa).

Zn(2+)-binding residues include cysteine 69, cysteine 71, cysteine 87, and cysteine 90. Aspartate 489, aspartate 491, and aspartate 493 together coordinate Mg(2+).

The protein belongs to the RNA polymerase beta' chain family. RpoC1 subfamily. In plastids the minimal PEP RNA polymerase catalytic core is composed of four subunits: alpha, beta, beta', and beta''. When a (nuclear-encoded) sigma factor is associated with the core the holoenzyme is formed, which can initiate transcription. It depends on Mg(2+) as a cofactor. The cofactor is Zn(2+).

The protein localises to the plastid. It localises to the chloroplast. The catalysed reaction is RNA(n) + a ribonucleoside 5'-triphosphate = RNA(n+1) + diphosphate. Functionally, DNA-dependent RNA polymerase catalyzes the transcription of DNA into RNA using the four ribonucleoside triphosphates as substrates. The polypeptide is DNA-directed RNA polymerase subunit beta' (Chara vulgaris (Common stonewort)).